The sequence spans 362 residues: Alcohol dehydrogenase 13 (362 aa).

Zn(2+) is bound by residues Cys-51, His-73, Cys-104, Cys-107, Cys-110, Cys-118, and Cys-168. His-73 provides a ligand contact to substrate. Residues 193 to 198 (GLGGLG) and 280 to 282 (VGA) each bind NAD(+).

This sequence belongs to the zinc-containing alcohol dehydrogenase family. Class-III subfamily. Homodimer. Requires Zn(2+) as cofactor.

The polypeptide is Alcohol dehydrogenase 13 (Catharanthus roseus (Madagascar periwinkle)).